The chain runs to 201 residues: MILQVVLLLACLSGAIVSTGACCPPSRFNAFQYVTIVNSTTRTRGLYYMVYDGPNERYLLTGDRLKNLYGTTRVIYDYKKGIAYNIDVQKRSCTTFPLHGKFEDQENVCVPRDAVYTGRSAYGFDQGALHSWSYEYNRTHPDGRHQNIETTVTKENCIPIVTTTISTDASGGNSLHILGYNDFYPGIRDISMLEIPSYCRA.

The first 21 residues, 1 to 21, serve as a signal peptide directing secretion; sequence MILQVVLLLACLSGAIVSTGA. N-linked (GlcNAc...) asparagine glycans are attached at residues asparagine 38 and asparagine 137. A Microbody targeting signal motif is present at residues 199 to 201; the sequence is CRA.

Belongs to the ependymin family. As to expression, component of the acid-soluble and acid-insoluble organic matrix of calcified shell layers (at protein level).

It localises to the secreted. The polypeptide is Ependymin-related protein 2 (Haliotis asinina (Donkey's ear abalone)).